The sequence spans 75 residues: Metallothionein-like protein 1 (75 aa).

The protein belongs to the metallothionein superfamily. Type 15 family.

In terms of biological role, metallothioneins have a high content of cysteine residues that bind various heavy metals. This Pisum sativum (Garden pea) protein is Metallothionein-like protein 1 (MTA).